The primary structure comprises 255 residues: uncharacterized protein (255 aa).

A disordered region spans residues 42 to 67 (ACSGSPPEPGKGRPDTTPEQEVPVTA).

This is an uncharacterized protein from Mycobacterium tuberculosis (strain CDC 1551 / Oshkosh).